Reading from the N-terminus, the 129-residue chain is MRSSSPSQPPSIKKAHRQAKRRAIRRRRIDLQCGCSIYFHIDCTGHGFTHRGIHHCTSGGEWRVYLGDSKSPVFQDIQSRGPAIHQNEDIPCTNTVQPQPEESVASPQSLPELPSLDDFDDSFWVNLFK.

Low complexity predominate over residues 1–12 (MRSSSPSQPPSI). The tract at residues 1-21 (MRSSSPSQPPSIKKAHRQAKR) is disordered. The Nuclear localization signal signature appears at 13 to 28 (KKAHRQAKRRAIRRRR). Residues 33 to 50 (CGCSIYFHIDCTGHGFTH) fold into a zinc finger. The interval 84 to 114 (IHQNEDIPCTNTVQPQPEESVASPQSLPELP) is disordered. Residues 92–109 (CTNTVQPQPEESVASPQS) show a composition bias toward polar residues. A transactivation region spans residues 115–129 (SLDDFDDSFWVNLFK).

It belongs to the geminiviridae transcriptional activator protein family. Monomer. Homodimer. Homooligomer. Self-interaction correlates with nuclear localization and efficient activation of transcription. Monomers suppress local silencing by interacting with and inactivating host adenosine kinase 2 (ADK2) in the cytoplasm. Interacts with and inhibits host SNF1 kinase. Binds to ssDNA. Post-translationally, phosphorylated.

It localises to the host nucleus. The protein resides in the host cytoplasm. Strong activator of the late viral genes promoters. Enhances the expression of the capsid protein and nuclear shuttle protein. Acts as a suppressor of RNA-mediated gene silencing, also known as post-transcriptional gene silencing (PTGS), a mechanism of plant viral defense that limits the accumulation of viral RNAs. Suppresses the host RNA silencing by inhibiting adenosine kinase 2 (ADK2), a kinase involved in a general methylation pathway. Also suppresses the host basal defense by interacting with and inhibiting SNF1 kinase, a key regulator of cell metabolism implicated in innate antiviral defense. Determines pathogenicity. This chain is Transcriptional activator protein, found in Abutilon (Upland cotton).